The following is a 495-amino-acid chain: Glycerol kinase (495 aa).

Thr-11 serves as a coordination point for ADP. Residues Thr-11, Thr-12, and Ser-13 each contribute to the ATP site. A sn-glycerol 3-phosphate-binding site is contributed by Thr-11. Arg-15 contributes to the ADP binding site. Sn-glycerol 3-phosphate is bound by residues Arg-81, Glu-82, Tyr-133, and Asp-242. The glycerol site is built by Arg-81, Glu-82, Tyr-133, Asp-242, and Gln-243. ADP-binding residues include Thr-264 and Gly-307. Residues Thr-264, Gly-307, Gln-311, and Gly-408 each coordinate ATP. The ADP site is built by Gly-408 and Asn-412.

The protein belongs to the FGGY kinase family.

The enzyme catalyses glycerol + ATP = sn-glycerol 3-phosphate + ADP + H(+). The protein operates within polyol metabolism; glycerol degradation via glycerol kinase pathway; sn-glycerol 3-phosphate from glycerol: step 1/1. Its activity is regulated as follows. Inhibited by fructose 1,6-bisphosphate (FBP). Its function is as follows. Key enzyme in the regulation of glycerol uptake and metabolism. Catalyzes the phosphorylation of glycerol to yield sn-glycerol 3-phosphate. In Alkalilimnicola ehrlichii (strain ATCC BAA-1101 / DSM 17681 / MLHE-1), this protein is Glycerol kinase.